The sequence spans 166 residues: Interferon gamma (166 aa).

An N-terminal signal peptide occupies residues 1-23 (MKYTSYFLALLLCGLLGFSGSYG). Pyrrolidone carboxylic acid is present on Gln24. Asn39 and Asn106 each carry an N-linked (GlcNAc...) asparagine glycan.

The protein belongs to the type II (or gamma) interferon family. In terms of assembly, homodimer. Interacts with IFNGR1 (via extracellular domain); this interaction promotes IFNGR1 dimerization. As to expression, released primarily from activated T lymphocytes.

The protein resides in the secreted. Its function is as follows. Type II interferon produced by immune cells such as T-cells and NK cells that plays crucial roles in antimicrobial, antiviral, and antitumor responses by activating effector immune cells and enhancing antigen presentation. Primarily signals through the JAK-STAT pathway after interaction with its receptor IFNGR1 to affect gene regulation. Upon IFNG binding, IFNGR1 intracellular domain opens out to allow association of downstream signaling components JAK2, JAK1 and STAT1, leading to STAT1 activation, nuclear translocation and transcription of IFNG-regulated genes. Many of the induced genes are transcription factors such as IRF1 that are able to further drive regulation of a next wave of transcription. Plays a role in class I antigen presentation pathway by inducing a replacement of catalytic proteasome subunits with immunoproteasome subunits. In turn, increases the quantity, quality, and repertoire of peptides for class I MHC loading. Increases the efficiency of peptide generation also by inducing the expression of activator PA28 that associates with the proteasome and alters its proteolytic cleavage preference. Up-regulates as well MHC II complexes on the cell surface by promoting expression of several key molecules such as cathepsins B/CTSB, H/CTSH, and L/CTSL. Participates in the regulation of hematopoietic stem cells during development and under homeostatic conditions by affecting their development, quiescence, and differentiation. In Bos taurus (Bovine), this protein is Interferon gamma (IFNG).